The chain runs to 284 residues: NAD kinase (284 aa).

The Proton acceptor role is filled by Asp-67. NAD(+)-binding positions include 67-68, 141-142, Arg-152, Lys-169, Asp-171, 182-187, and Gln-241; these read DG, ND, and TGYSLS.

Belongs to the NAD kinase family. The cofactor is a divalent metal cation.

It localises to the cytoplasm. It carries out the reaction NAD(+) + ATP = ADP + NADP(+) + H(+). In terms of biological role, involved in the regulation of the intracellular balance of NAD and NADP, and is a key enzyme in the biosynthesis of NADP. Catalyzes specifically the phosphorylation on 2'-hydroxyl of the adenosine moiety of NAD to yield NADP. In Geotalea daltonii (strain DSM 22248 / JCM 15807 / FRC-32) (Geobacter daltonii), this protein is NAD kinase.